The sequence spans 1745 residues: Collagen alpha-3(V) chain (1745 aa).

The first 29 residues, 1–29, serve as a signal peptide directing secretion; sequence MGNRRDLGQPRAGLCLLLAALQLLPGTQA. In terms of domain architecture, Laminin G-like spans 62-224; it reads DRAFRIGQAS…QACERYLPDC (163 aa). Residues Asn102 and Asn141 are each glycosylated (N-linked (GlcNAc...) asparagine). The segment at 211–391 is nonhelical region; sequence QAAFQACERY…AVIEKGQQFE (181 aa). Disordered regions lie at residues 230–304, 322–362, 387–439, and 476–1492; these read AATV…TPTP, RSLD…EYPS, GQQF…RGPP, and SMKG…PAEL. Over residues 244–267 the composition is skewed to basic residues; that stretch reads PRRKGKGKGRKKGRGRKGKGRKKN. Ser349 carries an O-linked (Xyl...) (chondroitin sulfate) serine glycan. Collagen-like domains lie at 391–440 and 482–538; these read EGPP…GPPG and GPVG…DGAR. A triple-helical region region spans residues 392–1489; it reads GPPGAPGPQG…AGPPGPPGAP (1098 aa). Over residues 406–424 the composition is skewed to pro residues; that stretch reads SGPPGPPGFPGDPGPPGPA. Composition is skewed to low complexity over residues 426–439, 489–499, and 597–619; these read LPGIPGIDGIRGPP, RPGPVGLPGHP, and EPGPRGLLGPRGSPGPTGRPGVT. The segment covering 724–733 has biased composition (basic and acidic residues); it reads QGEKGEKGED. A compositionally biased stretch (low complexity) spans 765 to 792; the sequence is PKGQAGQAGEEGPPGSAGEKGKLGVPGL. Collagen-like domains lie at 824–877, 905–950, and 951–989; these read GQPG…QGPP, GFQG…GLPG, and LEGREGAKGELGPPGPLGKEGPAGLRGFPGPKGGPGDPG. Low complexity predominate over residues 967–979; it reads LGKEGPAGLRGFP. The segment covering 1016 to 1025 has biased composition (gly residues); sequence GPAGGIGLPG. Composition is skewed to low complexity over residues 1116–1126 and 1141–1152; these read ADGAQGRRGPP and VGVIGPPGLQGL. Positions 1190–1199 are enriched in gly residues; the sequence is GLPGGVGQPG. The span at 1213 to 1222 shows a compositional bias: pro residues; the sequence is PGPPGAPGIP. A compositionally biased stretch (low complexity) spans 1234-1243; sequence SGPSGAAGPP. The span at 1318–1330 shows a compositional bias: basic and acidic residues; the sequence is MGREGREGEKGAK. The span at 1405–1416 shows a compositional bias: low complexity; that stretch reads IGLIGLIGPPGE. Positions 1429–1443 are enriched in pro residues; the sequence is QGPPGPKGDPGPPGP. The 59-residue stretch at 1430 to 1488 folds into the Collagen-like 6 domain; it reads GPPGPKGDPGPPGPIGSLGHPGPPGVAGPLGQKGSKGSPGSMGPRGDTGPAGPPGPPGA. The span at 1458–1479 shows a compositional bias: low complexity; it reads PLGQKGSKGSPGSMGPRGDTGP. Positions 1514-1744 constitute a Fibrillar collagen NC1 domain; it reads EEVLASLTSL…GFELGPVCFS (231 aa). 2 cysteine pairs are disulfide-bonded: Cys1585–Cys1742 and Cys1651–Cys1696.

The protein belongs to the fibrillar collagen family. As to quaternary structure, trimers of two alpha 1(V) and one alpha 2(V) chains in most tissues and trimers of one alpha 1(V), one alpha 2(V), and one alpha 3(V) chains in placenta. In terms of processing, prolines at the third position of the tripeptide repeating unit (G-X-Y) are hydroxylated in some or all of the chains. As to expression, detected in fibroblasts (at protein level). Detected in urine (at protein level).

Its subcellular location is the secreted. It localises to the extracellular space. The protein resides in the extracellular matrix. In terms of biological role, type V collagen is a member of group I collagen (fibrillar forming collagen). It is a minor connective tissue component of nearly ubiquitous distribution. Type V collagen binds to DNA, heparan sulfate, thrombospondin, heparin, and insulin. This is Collagen alpha-3(V) chain (COL5A3) from Homo sapiens (Human).